The following is a 67-amino-acid chain: DNA-directed RNA polymerase subunit omega (67 aa).

It belongs to the RNA polymerase subunit omega family. In terms of assembly, the RNAP catalytic core consists of 2 alpha, 1 beta, 1 beta' and 1 omega subunit. When a sigma factor is associated with the core the holoenzyme is formed, which can initiate transcription.

The enzyme catalyses RNA(n) + a ribonucleoside 5'-triphosphate = RNA(n+1) + diphosphate. Functionally, promotes RNA polymerase assembly. Latches the N- and C-terminal regions of the beta' subunit thereby facilitating its interaction with the beta and alpha subunits. The protein is DNA-directed RNA polymerase subunit omega of Legionella pneumophila (strain Paris).